Here is a 444-residue protein sequence, read N- to C-terminus: S-locus-specific glycoprotein (444 aa).

A signal peptide spans 1 to 28 (MRGVIPNYHHSYTLFFFVILVLFPHVFS). A Bulb-type lectin domain is found at 31–159 (TLSPNEALTI…KTNDLDRFMW (129 aa)). N-linked (GlcNAc...) asparagine glycans are attached at residues asparagine 43, asparagine 125, asparagine 243, and asparagine 396. The PAN domain occupies 356-437 (CGEGDGFLRM…GGQDLYVKVA (82 aa)). 2 disulfide bridges follow: cysteine 387–cysteine 412 and cysteine 395–cysteine 397.

As to expression, stigma.

In terms of biological role, involved in sporophytic self-incompatibility system (the inability of flowering plants to achieve self-fertilization). The polypeptide is S-locus-specific glycoprotein (SLSG) (Brassica oleracea var. alboglabra (Chinese kale)).